The primary structure comprises 99 residues: Keratinocyte differentiation-associated protein (99 aa).

Residues 1–22 form the signal peptide; that stretch reads MKIPVLPAVVLLSLLVLHSAQG.

In terms of tissue distribution, highly expressed in skin and detected at lower levels in thymus. In skin, found exclusively in lamellar granules of granular keratinocytes and in the intracellular space of the stratum corneum. Also highly expressed in oral mucosa, tongue, esophagus, and stomach, and at much lower levels in bladder and uterus. Not detected in gastrointestinal mucosa.

It is found in the secreted. In terms of biological role, may act as a soluble regulator of keratinocyte differentiation. May play an important role in embryonic skin morphogenesis. The sequence is that of Keratinocyte differentiation-associated protein (KRTDAP) from Homo sapiens (Human).